Reading from the N-terminus, the 440-residue chain is UDP-N-acetylmuramoylalanine--D-glutamate ligase (440 aa).

Residue 115 to 121 (GSNGKST) participates in ATP binding.

Belongs to the MurCDEF family.

The protein resides in the cytoplasm. The catalysed reaction is UDP-N-acetyl-alpha-D-muramoyl-L-alanine + D-glutamate + ATP = UDP-N-acetyl-alpha-D-muramoyl-L-alanyl-D-glutamate + ADP + phosphate + H(+). The protein operates within cell wall biogenesis; peptidoglycan biosynthesis. Cell wall formation. Catalyzes the addition of glutamate to the nucleotide precursor UDP-N-acetylmuramoyl-L-alanine (UMA). This Vibrio cholerae serotype O1 (strain ATCC 39541 / Classical Ogawa 395 / O395) protein is UDP-N-acetylmuramoylalanine--D-glutamate ligase.